The primary structure comprises 95 residues: Cytosolic calcium-binding protein 3 (95 aa).

6 repeat units span residues 30–35 (VEDAEK), 39–43 (DEEEK), 54–59 (VEEEKK), 67–71 (PEEKK), 75–79 (LEEKQ), and 90–94 (VEKAK). The segment at 30–94 (VEDAEKTNED…AEEVAVEKAK (65 aa)) is 6 X 5 AA approximate repeats of V-E-E-K-K. The tract at residues 54-95 (VEEEKKAEEVTETPEEKKTEALEEKQTEVAAAEEVAVEKAKE) is disordered. Positions 55-80 (EEEKKAEEVTETPEEKKTEALEEKQT) are enriched in basic and acidic residues.

Low levels in roots (e.g. in cambium) and barely expressed in stems, shoots, flowers, siliques and leaves.

Its subcellular location is the cytoplasm. The protein resides in the cytosol. Binds calcium Ca(2+) and may act as a signal mediator to buffer Ca(2+). The protein is Cytosolic calcium-binding protein 3 of Arabidopsis thaliana (Mouse-ear cress).